The following is a 312-amino-acid chain: Metaxin-1 homolog (312 aa).

Residues isoleucine 282–isoleucine 302 form a helical membrane-spanning segment.

Belongs to the metaxin family. In terms of assembly, associates with the mitochondrial contact site and cristae organizing system (MICOS) complex (also known as MINOS or MitOS complex).

It is found in the mitochondrion outer membrane. Involved in transport of proteins into the mitochondrion. Essential for embryonic development. This Caenorhabditis briggsae protein is Metaxin-1 homolog.